Here is a 206-residue protein sequence, read N- to C-terminus: MKHNNQLPVAQLRKHQQFRIKTFFNQAAQKKARLHARRAQAAAVFPRPTEKLQPVVRKQTQRYNKSTKLGRGFTLQELKAAGISAAFAQSIGIKVDHRRKNRCQESLELNKKRLLAYVSKLVLFPRHQGKAKKGLVNDTADTSSAAQNALQTSVPLPSVSKREKAVSNIAELRKKKVYRIIRQEKTNQKWDGKRKAKAQAAAEPKA.

Over residues 184–193 the composition is skewed to basic and acidic residues; the sequence is EKTNQKWDGK. The segment at 184-206 is disordered; that stretch reads EKTNQKWDGKRKAKAQAAAEPKA.

Belongs to the eukaryotic ribosomal protein eL13 family.

In Tetrahymena thermophila (strain SB210), this protein is Large ribosomal subunit protein eL13 (RPL13).